Consider the following 78-residue polypeptide: MSRVCQVTGKRPVSGNNRSHAMNATKRRFLPNLHSHRFWVEGEKRFVTLRVSAKGMRVIDKKGIETVLAEIRARGEKY.

Residues 1–21 form a disordered region; it reads MSRVCQVTGKRPVSGNNRSHA.

It belongs to the bacterial ribosomal protein bL28 family.

The sequence is that of Large ribosomal subunit protein bL28 from Yersinia enterocolitica serotype O:8 / biotype 1B (strain NCTC 13174 / 8081).